Consider the following 344-residue polypeptide: MITERQSNILNLIVDLFTQTHEPVGSKALQSLIASSSATIRNDMAKLEKLGLLEKAHTSSGRMPSAAGFKYFVEHSLNLGSIDEQDLYQLVKAFDFEAFKLEDVLLRASQMLSDTTGYTAAILDVEPARQRLTGFDIVQLSSHDALAVLSLDESKPLTVQFAIPKNFMNRDLLVLKGIVADRLLGKDVMTVHYKLRTEIPQIVQKYFTVTDNVLDLFDYIFVGLFRETIFVSGKVAALDYAGLATYQFLDEEQRLALSIRQSLSEEEMATVQVADSSEPALANVTLLTYKFLIPYRGFGLLSLIGPVDMDYRRSVSLINVIGQLLAVKLRDYYRYLNSNHYEVH.

Belongs to the HrcA family.

Negative regulator of class I heat shock genes (grpE-dnaK-dnaJ and groELS operons). Prevents heat-shock induction of these operons. This Streptococcus equi subsp. equi (strain 4047) protein is Heat-inducible transcription repressor HrcA.